The following is a 472-amino-acid chain: Eukaryotic translation initiation factor 2 subunit 3 (472 aa).

A2 bears the N-acetylalanine; partial mark. A Phosphoserine modification is found at S16. The 210-residue stretch at 39–248 (QATINIGTIG…IVKKIPVPPR (210 aa)) folds into the tr-type G domain. The interval 48–55 (GHVAHGKS) is G1. Position 51-56 (51-56 (AHGKST)) interacts with GTP. The interval 76-80 (NITIK) is G2. The segment at 134-137 (DCPG) is G3. GTP contacts are provided by residues 190–193 (NKID) and 225–227 (SAQ). Residues 190–193 (NKID) form a G4 region. Residues 225–227 (SAQ) are G5. The tract at residues 457-469 (GQIRRGVTIKPTV) is interacts with CDC123.

It belongs to the TRAFAC class translation factor GTPase superfamily. Classic translation factor GTPase family. EIF2G subfamily. As to quaternary structure, eukaryotic translation initiation factor 2 eIF2 is a heterotrimeric complex composed of an alpha (EIF2S1), a beta (EIF2S2) and a gamma (EIF2S3) chain. eIF2 is member of the 43S pre-initiation complex (43S PIC). Interacts (via C-terminus) with CDC123; the interaction is direct. Expressed in testis, brain, liver and muscle.

The protein localises to the cytoplasm. Its subcellular location is the cytosol. The catalysed reaction is GTP + H2O = GDP + phosphate + H(+). Member of the eIF2 complex that functions in the early steps of protein synthesis by forming a ternary complex with GTP and initiator tRNA. This complex binds to a 40S ribosomal subunit, followed by mRNA binding to form the 43S pre-initiation complex (43S PIC). Junction of the 60S ribosomal subunit to form the 80S initiation complex is preceded by hydrolysis of the GTP bound to eIF2 and release of an eIF2-GDP binary complex. In order for eIF2 to recycle and catalyze another round of initiation, the GDP bound to eIF2 must exchange with GTP by way of a reaction catalyzed by eIF-2B. The protein is Eukaryotic translation initiation factor 2 subunit 3 (EIF2S3) of Homo sapiens (Human).